Here is a 144-residue protein sequence, read N- to C-terminus: uncharacterized protein (144 aa).

This is an uncharacterized protein from Saccharomyces cerevisiae (strain ATCC 204508 / S288c) (Baker's yeast).